A 689-amino-acid polypeptide reads, in one-letter code: Armadillo-like helical domain-containing protein 3 (689 aa).

A helical membrane pass occupies residues 520-538; it reads IFTLTLMVVNLFNMFITYG.

This sequence belongs to the ARMH3 family.

It localises to the golgi apparatus membrane. The protein resides in the cytoplasm. Its function is as follows. May be involved in Golgi maintenance and protein secretion. This Xenopus laevis (African clawed frog) protein is Armadillo-like helical domain-containing protein 3.